The following is a 710-amino-acid chain: Secretin OutD (710 aa).

The first 27 residues, 1–27 (MLGKGIKKSWGWLGLTVLLLGSPCGWA), serve as a signal peptide directing secretion. The interval 28–105 (AEFSASFKGT…DNGVLKVIRS (78 aa)) is N0. An N1 region spans residues 123 to 190 (IGDELVTRVV…DIVNTVDKTG (68 aa)). The N2 stretch occupies residues 192 to 262 (REMVTVPLTY…VEMIRQLDRK (71 aa)). The N3 stretch occupies residues 288–399 (GNGTSGNRNS…INQLDIRRPQ (112 aa)). The disordered stretch occupies residues 289–353 (NGTSGNRNSS…AFGSTSSSGG (65 aa)). The tract at residues 401 to 648 (LVEAIIAEIQ…MLFLRPTIIR (248 aa)) is secretin. The segment at 691-710 (TYTFRQVQSSISDFYKPEGR) is s domain.

Belongs to the bacterial secretin family. GSP D subfamily. As to quaternary structure, forms a cylindrical channel with 15 subunits. Interacts with pilotin OutS.

Its subcellular location is the cell outer membrane. Functionally, involved in a type II secretion system (T2SS, formerly general secretion pathway, GSP) for the export of proteins. Required for the translocation of the multiple pectic enzymes. This subunit forms the outer membrane channel. This Dickeya dadantii (strain 3937) (Erwinia chrysanthemi (strain 3937)) protein is Secretin OutD (outD).